A 196-amino-acid chain; its full sequence is N-(5'-phosphoribosyl)anthranilate isomerase (196 aa).

This sequence belongs to the TrpF family.

It catalyses the reaction N-(5-phospho-beta-D-ribosyl)anthranilate = 1-(2-carboxyphenylamino)-1-deoxy-D-ribulose 5-phosphate. It participates in amino-acid biosynthesis; L-tryptophan biosynthesis; L-tryptophan from chorismate: step 3/5. The sequence is that of N-(5'-phosphoribosyl)anthranilate isomerase from Nitratiruptor sp. (strain SB155-2).